The sequence spans 98 residues: MSITTLNIMVAFMMALLGMFVYRSHLMSSLLCLEGMMLSLFMLATIVSLNMNFTISFMFPVILLVFAACEAAVGLALLIMVSNTYGMDYIHNLNLLQC.

3 helical membrane passes run Met-1–Val-21, Ser-29–Leu-49, and Val-61–Val-81.

The protein belongs to the complex I subunit 4L family. Core subunit of respiratory chain NADH dehydrogenase (Complex I) which is composed of 45 different subunits.

The protein resides in the mitochondrion inner membrane. The catalysed reaction is a ubiquinone + NADH + 5 H(+)(in) = a ubiquinol + NAD(+) + 4 H(+)(out). Functionally, core subunit of the mitochondrial membrane respiratory chain NADH dehydrogenase (Complex I) which catalyzes electron transfer from NADH through the respiratory chain, using ubiquinone as an electron acceptor. Part of the enzyme membrane arm which is embedded in the lipid bilayer and involved in proton translocation. The protein is NADH-ubiquinone oxidoreductase chain 4L (MT-ND4L) of Ochotona princeps (Southern American pika).